The chain runs to 595 residues: Protein alan shepard (595 aa).

The segment covering 1 to 12 has biased composition (pro residues); it reads MHPRYSPAPPPH. Residues 1 to 82 are disordered; the sequence is MHPRYSPAPP…ASVAAAPPTP (82 aa). Phosphotyrosine is present on tyrosine 5. A compositionally biased stretch (low complexity) spans 13 to 31; that stretch reads QQQQQQQQQPMGGPHQQQS. Gly residues predominate over residues 32–43; it reads AGGGPGHGGGAS. The segment covering 50–68 has biased composition (polar residues); that stretch reads PNSQQLPPQMPRSQNYANG. Low complexity predominate over residues 69 to 78; it reads SSSAASVAAA. Phosphotyrosine occurs at positions 138 and 154. A disordered region spans residues 184–238; that stretch reads RVPTAASPSNTNSSSSSNTGSQSGTLSTSLSNTTNTNTTMGPNGTAQNQNQQGGE. Positions 190 to 238 are enriched in low complexity; that stretch reads SPSNTNSSSSSNTGSQSGTLSTSLSNTTNTNTTMGPNGTAQNQNQQGGE. 2 consecutive RRM domains span residues 243–316 and 322–401; these read TNLY…MAKQ and TNLY…FADG. The segment at 569 to 595 is disordered; the sequence is MTDSEQASTAASPDEAYTQYPHQAAPK.

Functionally, has a role in the perception of gravity. This Drosophila virilis (Fruit fly) protein is Protein alan shepard.